Reading from the N-terminus, the 261-residue chain is tRNA pseudouridine synthase A (261 aa).

Aspartate 51 serves as the catalytic Nucleophile. Tyrosine 109 is a binding site for substrate.

This sequence belongs to the tRNA pseudouridine synthase TruA family. Homodimer.

It carries out the reaction uridine(38/39/40) in tRNA = pseudouridine(38/39/40) in tRNA. Formation of pseudouridine at positions 38, 39 and 40 in the anticodon stem and loop of transfer RNAs. The sequence is that of tRNA pseudouridine synthase A from Methylobacillus flagellatus (strain ATCC 51484 / DSM 6875 / VKM B-1610 / KT).